The chain runs to 170 residues: Acireductone dioxygenase (170 aa).

Fe(2+) is bound by residues His99, His101, Glu105, and His144. 4 residues coordinate Ni(2+): His99, His101, Glu105, and His144.

It belongs to the acireductone dioxygenase (ARD) family. In terms of assembly, monomer. The cofactor is Fe(2+). Requires Ni(2+) as cofactor.

It carries out the reaction 1,2-dihydroxy-5-(methylsulfanyl)pent-1-en-3-one + O2 = 3-(methylsulfanyl)propanoate + CO + formate + 2 H(+). The enzyme catalyses 1,2-dihydroxy-5-(methylsulfanyl)pent-1-en-3-one + O2 = 4-methylsulfanyl-2-oxobutanoate + formate + 2 H(+). It participates in amino-acid biosynthesis; L-methionine biosynthesis via salvage pathway; L-methionine from S-methyl-5-thio-alpha-D-ribose 1-phosphate: step 5/6. Its function is as follows. Catalyzes 2 different reactions between oxygen and the acireductone 1,2-dihydroxy-3-keto-5-methylthiopentene (DHK-MTPene) depending upon the metal bound in the active site. Fe-containing acireductone dioxygenase (Fe-ARD) produces formate and 2-keto-4-methylthiobutyrate (KMTB), the alpha-ketoacid precursor of methionine in the methionine recycle pathway. Ni-containing acireductone dioxygenase (Ni-ARD) produces methylthiopropionate, carbon monoxide and formate, and does not lie on the methionine recycle pathway. This chain is Acireductone dioxygenase, found in Bacillus cereus (strain ATCC 14579 / DSM 31 / CCUG 7414 / JCM 2152 / NBRC 15305 / NCIMB 9373 / NCTC 2599 / NRRL B-3711).